The sequence spans 122 residues: Thioredoxin H-type (122 aa).

The 117-residue stretch at 2–118 folds into the Thioredoxin domain; sequence AAEEGVVIAC…IVKHVGATAA (117 aa). C40 and C43 are disulfide-bonded.

It is found in the cytoplasm. Its function is as follows. Participates in various redox reactions through the reversible oxidation of the active center dithiol to a disulfide. The H form is known to activate a number of cytosolic enzymes. The chain is Thioredoxin H-type (TRXH) from Oryza sativa subsp. indica (Rice).